Reading from the N-terminus, the 365-residue chain is Eukaryotic translation initiation factor 3 subunit H (365 aa).

Positions 11–160 (VKVEALVVMK…LRAFRLSPKF (150 aa)) constitute an MPN domain.

This sequence belongs to the eIF-3 subunit H family. Component of the eukaryotic translation initiation factor 3 (eIF-3) complex.

Its subcellular location is the cytoplasm. Functionally, component of the eukaryotic translation initiation factor 3 (eIF-3) complex, which is involved in protein synthesis of a specialized repertoire of mRNAs and, together with other initiation factors, stimulates binding of mRNA and methionyl-tRNAi to the 40S ribosome. The eIF-3 complex specifically targets and initiates translation of a subset of mRNAs involved in cell proliferation. This chain is Eukaryotic translation initiation factor 3 subunit H, found in Aspergillus fumigatus (strain CBS 144.89 / FGSC A1163 / CEA10) (Neosartorya fumigata).